Reading from the N-terminus, the 140-residue chain is Early nodulin-like protein 22 (140 aa).

The first 28 residues, 1-28, serve as a signal peptide directing secretion; that stretch reads MAQSSGHVSYVAVTVPIAIVMTVLCLFL. The 100-residue stretch at 39–138 folds into the Phytocyanin domain; it reads TTYIVGGDDG…GLKMAIKALA (100 aa). N-linked (GlcNAc...) asparagine glycosylation is present at Asn85. A disulfide bridge connects residues Cys92 and Cys126.

Belongs to the early nodulin-like (ENODL) family.

May act as a carbohydrate transporter. This Arabidopsis thaliana (Mouse-ear cress) protein is Early nodulin-like protein 22.